The following is a 339-amino-acid chain: Anthranilate phosphoribosyltransferase (339 aa).

5-phospho-alpha-D-ribose 1-diphosphate contacts are provided by residues G80, 83 to 84 (GD), T88, 90 to 93 (NIST), 108 to 116 (KHGNRAVSS), and S120. G80 provides a ligand contact to anthranilate. S92 serves as a coordination point for Mg(2+). N111 provides a ligand contact to anthranilate. R166 contacts anthranilate. The Mg(2+) site is built by D225 and E226.

The protein belongs to the anthranilate phosphoribosyltransferase family. In terms of assembly, homodimer. The cofactor is Mg(2+).

It catalyses the reaction N-(5-phospho-beta-D-ribosyl)anthranilate + diphosphate = 5-phospho-alpha-D-ribose 1-diphosphate + anthranilate. It participates in amino-acid biosynthesis; L-tryptophan biosynthesis; L-tryptophan from chorismate: step 2/5. Functionally, catalyzes the transfer of the phosphoribosyl group of 5-phosphorylribose-1-pyrophosphate (PRPP) to anthranilate to yield N-(5'-phosphoribosyl)-anthranilate (PRA). The sequence is that of Anthranilate phosphoribosyltransferase from Caldanaerobacter subterraneus subsp. tengcongensis (strain DSM 15242 / JCM 11007 / NBRC 100824 / MB4) (Thermoanaerobacter tengcongensis).